The following is a 335-amino-acid chain: Transcriptional coactivator YAP1-B (335 aa).

Positions 1 to 13 are enriched in low complexity; sequence MEPGSQQQPSAPG. The interval 1 to 21 is disordered; sequence MEPGSQQQPSAPGQQPPPVGH. S30 carries the post-translational modification Phosphoserine; by LATS1 and LATS2. Polar residues predominate over residues 114 to 124; that stretch reads MNQQRLSQSAP. A disordered region spans residues 114–146; that stretch reads MNQQRLSQSAPVKSPPALQPQSPPSGVLGSGGN. Pro residues predominate over residues 126-136; the sequence is KSPPALQPQSP. The tract at residues 137 to 335 is transactivation domain; sequence PSGVLGSGGN…LDKESFLTWL (199 aa). Positions 145–173 form a coiled coil; it reads GNQQMRLQQLQMEKERLRLKHQELLRQVR.

Belongs to the YAP1 family. Phosphorylated by lats1 and lats2; leading to cytoplasmic translocation and inactivation.

The protein resides in the cytoplasm. The protein localises to the nucleus. It localises to the cell junction. It is found in the tight junction. Its subcellular location is the cell membrane. In terms of biological role, transcriptional regulator which can act both as a coactivator and a corepressor and is the critical downstream regulatory target in the Hippo signaling pathway that plays a pivotal role in organ size control and tumor suppression by restricting proliferation and promoting apoptosis. Plays a key role in tissue tension and 3D tissue shape by regulating cortical actomyosin network formation. The polypeptide is Transcriptional coactivator YAP1-B (Xenopus laevis (African clawed frog)).